An 865-amino-acid polypeptide reads, in one-letter code: DNA mismatch repair protein MutS (865 aa).

Residue 605 to 612 (GPNMAGKS) coordinates ATP. The segment at 814-833 (PEPLEAYKPKGNKQPLSDEE) is disordered.

This sequence belongs to the DNA mismatch repair MutS family.

Functionally, this protein is involved in the repair of mismatches in DNA. It is possible that it carries out the mismatch recognition step. This protein has a weak ATPase activity. In Halalkalibacterium halodurans (strain ATCC BAA-125 / DSM 18197 / FERM 7344 / JCM 9153 / C-125) (Bacillus halodurans), this protein is DNA mismatch repair protein MutS.